Reading from the N-terminus, the 393-residue chain is Chalcone synthase 1 (393 aa).

Cysteine 166 is a catalytic residue.

The protein belongs to the thiolase-like superfamily. Chalcone/stilbene synthases family.

The enzyme catalyses (E)-4-coumaroyl-CoA + 3 malonyl-CoA + 3 H(+) = 2',4,4',6'-tetrahydroxychalcone + 3 CO2 + 4 CoA. Its pathway is secondary metabolite biosynthesis; flavonoid biosynthesis. The primary product of this enzyme is 4,2',4',6'-tetrahydroxychalcone (also termed naringenin-chalcone or chalcone) which can under specific conditions spontaneously isomerize into naringenin. This Ruta graveolens (Common rue) protein is Chalcone synthase 1 (CHS1).